The chain runs to 116 residues: Cuticle protein AM1274 (116 aa).

Q1 is modified (pyrrolidone carboxylic acid). Residues 1-22 (QLANEPPIEIIRQESTDNGDGN) form a disordered region. The 66-residue stretch at 20–85 (DGNFNFLFET…PVSDFIPTPH (66 aa)) folds into the Chitin-binding type R&amp;R domain. The O-linked (HexNAc) threonine glycan is linked to T83.

In terms of tissue distribution, arthrodial membrane.

The protein is Cuticle protein AM1274 of Cancer pagurus (Rock crab).